Here is a 255-residue protein sequence, read N- to C-terminus: Triosephosphate isomerase (255 aa).

9–11 (NWK) is a substrate binding site. The active-site Electrophile is the histidine 96. The active-site Proton acceptor is the glutamate 170. Residues glycine 176, serine 216, and 237–238 (GG) contribute to the substrate site.

Belongs to the triosephosphate isomerase family. As to quaternary structure, homodimer.

It localises to the cytoplasm. It catalyses the reaction D-glyceraldehyde 3-phosphate = dihydroxyacetone phosphate. Its pathway is carbohydrate biosynthesis; gluconeogenesis. It participates in carbohydrate degradation; glycolysis; D-glyceraldehyde 3-phosphate from glycerone phosphate: step 1/1. In terms of biological role, involved in the gluconeogenesis. Catalyzes stereospecifically the conversion of dihydroxyacetone phosphate (DHAP) to D-glyceraldehyde-3-phosphate (G3P). The sequence is that of Triosephosphate isomerase from Magnetococcus marinus (strain ATCC BAA-1437 / JCM 17883 / MC-1).